A 457-amino-acid polypeptide reads, in one-letter code: MALWGGRFTQPADQRFKQFNDSLRFDYRLAEQDIIGSVAWSKALVTVNVLTAAEQQQLESALTALLDEVRADPQQILASDAEDIHSWVEGKLIDKVGALGKKLHTGRSRNDQVATDLKLWCKEQVSELLNATRQFQQALVATAEAHQDAVMPGYTHLQRAQPVTFAHWCLAYVEMLARDESRLQDTLKRLDVSPLGCGALAGTAYDIDREQLAGWLGFASATRNSLDTVSDRDHVLELLSDASIGMVHLSRFAEDLIFFNTGEAGFVELSDKVTSGSSLMPQKKNPDALELIRGKVGRVQGALTAMSMTLKGLPLAYNKDMQEDKEGLFDALDTWADCLHMAALVLDGIQVKRPRCQEAAEQGYANSTELADYLVAKGVPFREAHHIVGETVVEAIKQGVALEALKLSDLQKFSHVIGDDVYPILSLQSCLDKRNAKGGVSLHQISQAITEAKQRLA.

It belongs to the lyase 1 family. Argininosuccinate lyase subfamily.

It is found in the cytoplasm. It catalyses the reaction 2-(N(omega)-L-arginino)succinate = fumarate + L-arginine. It functions in the pathway amino-acid biosynthesis; L-arginine biosynthesis; L-arginine from L-ornithine and carbamoyl phosphate: step 3/3. This is Argininosuccinate lyase from Erwinia tasmaniensis (strain DSM 17950 / CFBP 7177 / CIP 109463 / NCPPB 4357 / Et1/99).